The primary structure comprises 206 residues: MATRRRTLLKVIVLGDSGVGKTSLMNQYVHKKFSMQYKATIGADFVTKELQIGEKLVTLQIWDTAGQERFQSLGAAFYRGADCCALVYDVNVLRSFDNLETWHEEFLKQASPSDPKTFPFIVLGNKIDVDGGSSRVVSDKKAADWCASNGNIPYFETSAKDDFNVDEAFLTIAKTALANEHEQDIYFQGIPDAVTENEPKGGGCAC.

Position 15 to 22 (15 to 22 (GDSGVGKT)) interacts with GTP. Positions 37–45 (YKATIGADF) match the Effector region motif. GTP is bound by residues 63–67 (DTAGQ), 125–128 (NKID), and 158–159 (SA). Residues Cys204 and Cys206 are each lipidated (S-geranylgeranyl cysteine). Cysteine methyl ester is present on Cys206.

It belongs to the small GTPase superfamily. Rab family.

The protein localises to the cell membrane. Functionally, intracellular vesicle trafficking and protein transport. The chain is Ras-related protein RABG3a (RABG3A) from Arabidopsis thaliana (Mouse-ear cress).